Reading from the N-terminus, the 434-residue chain is Probable glucuronosyltransferase Os02g0520750 (434 aa).

At 1 to 10 (MVGARAGRVP) the chain is on the cytoplasmic side. A helical; Signal-anchor for type II membrane protein membrane pass occupies residues 11–31 (AAAAAAAAVLIVAACVFSSLA). The Lumenal portion of the chain corresponds to 32–434 (GAAAAAEVVG…GPVADLKPWK (403 aa)). Asparagine 160 and asparagine 421 each carry an N-linked (GlcNAc...) asparagine glycan.

The protein belongs to the glycosyltransferase 47 family.

Its subcellular location is the golgi apparatus membrane. Functionally, involved in the synthesis of glucuronoxylan hemicellulose in secondary cell walls. The sequence is that of Probable glucuronosyltransferase Os02g0520750 from Oryza sativa subsp. japonica (Rice).